Consider the following 70-residue polypeptide: Sec-independent protein translocase protein TatA (70 aa).

A helical transmembrane segment spans residues 1 to 21 (MGIGVWELLLLFLIVLVVFGT). A disordered region spans residues 42–70 (MSENEDKPSEGGARTLEGEVVDKKEKDKV). Positions 57-70 (LEGEVVDKKEKDKV) are enriched in basic and acidic residues.

It belongs to the TatA/E family. As to quaternary structure, the Tat system comprises two distinct complexes: a TatABC complex, containing multiple copies of TatA, TatB and TatC subunits, and a separate TatA complex, containing only TatA subunits. Substrates initially bind to the TatABC complex, which probably triggers association of the separate TatA complex to form the active translocon.

The protein localises to the cell inner membrane. In terms of biological role, part of the twin-arginine translocation (Tat) system that transports large folded proteins containing a characteristic twin-arginine motif in their signal peptide across membranes. TatA could form the protein-conducting channel of the Tat system. This chain is Sec-independent protein translocase protein TatA, found in Methylococcus capsulatus (strain ATCC 33009 / NCIMB 11132 / Bath).